The following is a 534-amino-acid chain: MIWYILVVGILLPQSLAHPGFFTSIGQMTDLIHTEKDLVTSLKDYIKAEEDKLEQIKKWAEKLDRLTSTATKDPEGFVGHPVNAFKLMKRLNTEWSELENLVLKDMSDGFISNLTIQRQYFPNDEDQVGAAKALLRLQDTYNLDTDTISKGDLPGVKHKSFLTVEDCFELGKVAYTEADYYHTELWMEQALRQLDEGEVSTVDKVSVLDYLSYAVYQQGDLDKALLLTKKLLELDPEHQRANGNLKYFEYIMAKEKDANKSSSDDQSDQKTTLKKKGAAVDYLPERQKYEMLCRGEGIKMTPRRQKKLFCRYHDGNRNPKFILAPAKQEDEWDKPRIIRFHDIISDAEIEVVKDLAKPRLRRATISNPITGDLETVHYRISKSAWLSGYENPVVSRINMRIQDLTGLDVSTAEELQVANYGVGGQYEPHFDFARKDEPDAFKELGTGNRIATWLFYMSDVLAGGATVFPEVGASVWPKKGTAVFWYNLFASGEGDYSTRHAACPVLVGNKWVSNKWLHERGQEFRRPCTLSELE.

Positions 1-17 (MIWYILVVGILLPQSLA) are cleaved as a signal peptide. N-linked (GlcNAc...) asparagine glycosylation is present at Asn113. One copy of the TPR repeat lies at 205–238 (VSVLDYLSYAVYQQGDLDKALLLTKKLLELDPEH). Positions 258–277 (ANKSSSDDQSDQKTTLKKKG) are disordered. Asn259 carries N-linked (GlcNAc...) asparagine glycosylation. The 109-residue stretch at 411-519 (TAEELQVANY…KWVSNKWLHE (109 aa)) folds into the Fe2OG dioxygenase domain. Residues His429, Asp431, and His500 each coordinate Fe cation. Lys510 is a binding site for 2-oxoglutarate.

The protein belongs to the P4HA family. Heterotetramer of two alpha-1 chains and two beta chains (P4HB)(the beta chain is the multi-functional PDI), where P4HB plays the role of a structural subunit; this tetramer catalyzes the formation of 4-hydroxyproline in collagen. Fe(2+) is required as a cofactor. It depends on L-ascorbate as a cofactor.

It is found in the endoplasmic reticulum lumen. It carries out the reaction L-prolyl-[collagen] + 2-oxoglutarate + O2 = trans-4-hydroxy-L-prolyl-[collagen] + succinate + CO2. Its function is as follows. Catalyzes the post-translational formation of 4-hydroxyproline in -Xaa-Pro-Gly- sequences in collagens and other proteins. The protein is Prolyl 4-hydroxylase subunit alpha-1 (P4HA1) of Bos taurus (Bovine).